Reading from the N-terminus, the 159-residue chain is bZIP transcription factor 11 (159 aa).

The segment covering 1-21 has biased composition (low complexity); sequence MESSSSGTTSSTIQTSSGSEE. Residues 1 to 47 form a disordered region; sequence MESSSSGTTSSTIQTSSGSEESLMEQRKRKRMLSNRESARRSRMKKQ. One can recognise a bZIP domain in the interval 25–88; it reads EQRKRKRMLS…LTVEAENSVL (64 aa). The tract at residues 27–48 is basic motif; it reads RKRKRMLSNRESARRSRMKKQK. The interval 53–67 is leucine-zipper; sequence LTAQVNHLKKENTEI.

Forms heterodimers with BZIP1, BZIP9, BZIP10, BZIP25 and BZIP63. Interacts with ADA2B. In terms of tissue distribution, highly expressed in stems and flowers. Expressed in root tips, cotyledons, leaf vasculature, embryos, apical parts of siliques and funiculi.

Its subcellular location is the nucleus. Functionally, transcription factor that binds to the DNA sequence 5'-ACTCAT-3' in target gene promoters. Promotes POX1/PRODH1 expression in response to hypoosmolarity stress. Positively regulates the expression of ASN1 and POX2/PRODH2 genes, which are involved in amino acid metabolism. Regulates several metabolic pathways such as myo-inositol, raffinose and trehalose. Regulates several trehalose metabolism genes, including TRE1, TPP5 and TPP6. Mediates recruitment of the histone acetylation machinery to activate auxin-induced transcription. Interacts with ADA2B adapter protein to promote ADA2B-mediated recruitment of SAGA-like histone acetyltransferase complexes to specific auxin-responsive genes. In Arabidopsis thaliana (Mouse-ear cress), this protein is bZIP transcription factor 11.